A 269-amino-acid chain; its full sequence is 4-hydroxy-tetrahydrodipicolinate reductase (269 aa).

An NAD(+)-binding site is contributed by 11-16 (GPIGRM). Lys-39 contributes to the NADP(+) binding site. NAD(+) contacts are provided by residues 101-103 (GTT) and 125-128 (ASNF). Catalysis depends on His-158, which acts as the Proton donor/acceptor. A (S)-2,3,4,5-tetrahydrodipicolinate-binding site is contributed by His-159. Residue Lys-162 is the Proton donor of the active site. 168–169 (GT) serves as a coordination point for (S)-2,3,4,5-tetrahydrodipicolinate.

This sequence belongs to the DapB family. As to quaternary structure, homotetramer.

It is found in the cytoplasm. It catalyses the reaction (S)-2,3,4,5-tetrahydrodipicolinate + NAD(+) + H2O = (2S,4S)-4-hydroxy-2,3,4,5-tetrahydrodipicolinate + NADH + H(+). The catalysed reaction is (S)-2,3,4,5-tetrahydrodipicolinate + NADP(+) + H2O = (2S,4S)-4-hydroxy-2,3,4,5-tetrahydrodipicolinate + NADPH + H(+). It participates in amino-acid biosynthesis; L-lysine biosynthesis via DAP pathway; (S)-tetrahydrodipicolinate from L-aspartate: step 4/4. Functionally, catalyzes the conversion of 4-hydroxy-tetrahydrodipicolinate (HTPA) to tetrahydrodipicolinate. This chain is 4-hydroxy-tetrahydrodipicolinate reductase, found in Buchnera aphidicola subsp. Acyrthosiphon pisum (strain 5A).